Here is a 419-residue protein sequence, read N- to C-terminus: S-adenosylmethionine synthase (419 aa).

Position 15 (histidine 15) interacts with ATP. Residue aspartate 17 participates in Mg(2+) binding. Position 43 (glutamate 43) interacts with K(+). Residues glutamate 56 and glutamine 100 each contribute to the L-methionine site. Residues 100–110 are flexible loop; the sequence is QSPDIAQGVDE. ATP is bound by residues 171 to 173, 248 to 249, aspartate 257, 263 to 264, alanine 280, and lysine 284; these read DGK, KF, and RK. Aspartate 257 serves as a coordination point for L-methionine. L-methionine is bound at residue lysine 288.

The protein belongs to the AdoMet synthase family. Homotetramer; dimer of dimers. The cofactor is Mg(2+). K(+) serves as cofactor.

The protein resides in the cytoplasm. The enzyme catalyses L-methionine + ATP + H2O = S-adenosyl-L-methionine + phosphate + diphosphate. It participates in amino-acid biosynthesis; S-adenosyl-L-methionine biosynthesis; S-adenosyl-L-methionine from L-methionine: step 1/1. Functionally, catalyzes the formation of S-adenosylmethionine (AdoMet) from methionine and ATP. The overall synthetic reaction is composed of two sequential steps, AdoMet formation and the subsequent tripolyphosphate hydrolysis which occurs prior to release of AdoMet from the enzyme. This Parasynechococcus marenigrum (strain WH8102) protein is S-adenosylmethionine synthase.